Reading from the N-terminus, the 145-residue chain is 3-dehydroquinate dehydratase (145 aa).

The active-site Proton acceptor is the Y24. N76, H82, and D89 together coordinate substrate. H102 serves as the catalytic Proton donor. Residues 103–104 (VS) and R113 contribute to the substrate site.

It belongs to the type-II 3-dehydroquinase family. Homododecamer.

The catalysed reaction is 3-dehydroquinate = 3-dehydroshikimate + H2O. It participates in metabolic intermediate biosynthesis; chorismate biosynthesis; chorismate from D-erythrose 4-phosphate and phosphoenolpyruvate: step 3/7. In terms of biological role, catalyzes a trans-dehydration via an enolate intermediate. In Janthinobacterium sp. (strain Marseille) (Minibacterium massiliensis), this protein is 3-dehydroquinate dehydratase.